Here is a 267-residue protein sequence, read N- to C-terminus: Hydroxynaphthalene reductase-like protein Arp2 (267 aa).

4 residues coordinate NADP(+): I25, N45, D71, and N98. Catalysis depends on proton donor residues S147 and S148. Residues Y162, K166, V195, and T197 each contribute to the NADP(+) site. Catalysis depends on Y162, which acts as the Proton acceptor. K166 functions as the Lowers pKa of active site Tyr in the catalytic mechanism.

Belongs to the short-chain dehydrogenases/reductases (SDR) family.

In terms of biological role, hydroxynaphthalene reductase-like protein; part of the Pks2 gene cluster that mediates the formation of infectious structures (appressoria), enabling these fungi to kill insects faster. The product of the Pks2 gene cluster is different from the one of Pks1 and has still not been identified. The polypeptide is Hydroxynaphthalene reductase-like protein Arp2 (Metarhizium anisopliae (strain ARSEF 549)).